Reading from the N-terminus, the 338-residue chain is Fructose-1,6-bisphosphatase class 1 (338 aa).

The Mg(2+) site is built by Glu-90, Asp-112, Leu-114, and Asp-115. Substrate-binding positions include 115 to 118 (DGSS), Asn-207, and Lys-273. Residue Glu-279 coordinates Mg(2+).

Belongs to the FBPase class 1 family. In terms of assembly, homotetramer. Mg(2+) serves as cofactor.

It is found in the cytoplasm. It carries out the reaction beta-D-fructose 1,6-bisphosphate + H2O = beta-D-fructose 6-phosphate + phosphate. It functions in the pathway carbohydrate biosynthesis; gluconeogenesis. In Stenotrophomonas maltophilia (strain K279a), this protein is Fructose-1,6-bisphosphatase class 1.